Consider the following 839-residue polypeptide: Taste receptor type 1 member 2 (839 aa).

Positions methionine 1–alanine 19 are cleaved as a signal peptide. The Extracellular segment spans residues glutamate 20 to threonine 566. Residues asparagine 84, asparagine 248, asparagine 292, asparagine 312, asparagine 368, asparagine 428, asparagine 487, and asparagine 527 are each glycosylated (N-linked (GlcNAc...) asparagine). The chain crosses the membrane as a helical span at residues isoleucine 567 to phenylalanine 587. The Cytoplasmic segment spans residues tryptophan 588–proline 602. A helical membrane pass occupies residues methionine 603–glycine 623. Topologically, residues proline 624–alanine 635 are extracellular. A helical transmembrane segment spans residues leucine 636–isoleucine 656. Residues cysteine 657 to serine 681 lie on the Cytoplasmic side of the membrane. The helical transmembrane segment at methionine 682–leucine 702 threads the bilayer. The Extracellular segment spans residues asparagine 703–serine 727. The helical transmembrane segment at leucine 728–methionine 748 threads the bilayer. The Cytoplasmic segment spans residues glycine 749–lysine 760. A helical membrane pass occupies residues phenylalanine 761–serine 781. The Extracellular segment spans residues alanine 782 to serine 784. A helical transmembrane segment spans residues glycine 785–leucine 805. The Cytoplasmic portion of the chain corresponds to glycine 806 to aspartate 839.

It belongs to the G-protein coupled receptor 3 family. TAS1R subfamily. As to quaternary structure, forms heterodimers with TAS1R3.

Its subcellular location is the cell membrane. In terms of biological role, putative taste receptor. TAS1R2/TAS1R3 recognizes diverse natural and synthetic sweeteners. In Pongo pygmaeus (Bornean orangutan), this protein is Taste receptor type 1 member 2 (TAS1R2).